The following is a 67-amino-acid chain: ATP synthase F(0) complex subunit 8 (67 aa).

Residues 8–24 (TWFITILSMLITLFILF) traverse the membrane as a helical segment. Residue Lys-54 is modified to N6-acetyllysine; alternate. N6-succinyllysine; alternate is present on Lys-54. An N6-acetyllysine modification is found at Lys-57.

Belongs to the ATPase protein 8 family. Component of the ATP synthase complex composed at least of ATP5F1A/subunit alpha, ATP5F1B/subunit beta, ATP5MC1/subunit c (homooctomer), MT-ATP6/subunit a, MT-ATP8/subunit 8, ATP5ME/subunit e, ATP5MF/subunit f, ATP5MG/subunit g, ATP5MK/subunit k, ATP5MJ/subunit j, ATP5F1C/subunit gamma, ATP5F1D/subunit delta, ATP5F1E/subunit epsilon, ATP5PF/subunit F6, ATP5PB/subunit b, ATP5PD/subunit d, ATP5PO/subunit OSCP. ATP synthase complex consists of a soluble F(1) head domain (subunits alpha(3) and beta(3)) - the catalytic core - and a membrane F(0) domain - the membrane proton channel (subunits c, a, 8, e, f, g, k and j). These two domains are linked by a central stalk (subunits gamma, delta, and epsilon) rotating inside the F1 region and a stationary peripheral stalk (subunits F6, b, d, and OSCP). Interacts with PRICKLE3.

Its subcellular location is the mitochondrion membrane. Subunit 8, of the mitochondrial membrane ATP synthase complex (F(1)F(0) ATP synthase or Complex V) that produces ATP from ADP in the presence of a proton gradient across the membrane which is generated by electron transport complexes of the respiratory chain. ATP synthase complex consist of a soluble F(1) head domain - the catalytic core - and a membrane F(1) domain - the membrane proton channel. These two domains are linked by a central stalk rotating inside the F(1) region and a stationary peripheral stalk. During catalysis, ATP synthesis in the catalytic domain of F(1) is coupled via a rotary mechanism of the central stalk subunits to proton translocation. In vivo, can only synthesize ATP although its ATP hydrolase activity can be activated artificially in vitro. Part of the complex F(0) domain. The polypeptide is ATP synthase F(0) complex subunit 8 (Dugong dugon (Dugong)).